We begin with the raw amino-acid sequence, 540 residues long: FAD-binding monooxygenase lolF2 (540 aa).

FAD-binding positions include 43–46 (VWRE) and 55–58 (DSLF). Residues 53–55 (AVD), 182–188 (TGPSGVQ), and 205–206 (QS) each bind NADP(+).

It belongs to the FAD-binding monooxygenase family. FAD is required as a cofactor.

It functions in the pathway alkaloid biosynthesis. FAD-binding monooxygenase; part of the gene cluster that mediates the biosynthesis of loline alkaloids, potent insecticidal agents composed of a pyrrolizidine ring system and an uncommon ether bridge linking carbons 2 and 7. Lolines are structurally differentiated by the various modifications of the L-amino group and include norloline, loline, N-methylloline, N-acetylloline, N-acetylnorloline, and N-formylloline. The first committed step is the condensation of O-acetyl-L-homoserine (derived from L-aspartic acid) and L-proline, probably catalyzed by the gamma-type pyridoxal 5'-phosphate(PLP)-dependent enzyme lolC, to give the diamino diacid, NACPP. Ensuing cyclization, decarboxylation, and acetylation steps yield 1-exo-acetamidopyrrolizidine (AcAP). LolO is required for installation of the ether bridge upon the pathway intermediate, 1-exo-acetamidopyrrolizidine (AcAP). In sequential 2-oxoglutarate- and O(2)-consuming steps, lolO removes hydrogens from C2 and C7 of AcAP to form both carbon-oxygen bonds in N-acetylnorloline (NANL), the precursor to all other lolines. The enzymes lolD, lolE, lolF and lolT have also been proposed to be involved in the ether-bridge installation. Further processing of the exocyclic moiety of NANL by fungal N-acetamidase (LolN), methyltransferase (LolM), and cytochrome P450 (LolP) enzymes, with occasional involvement of a plant acetyltransferase, generates the other known lolines. LolN transforms NANL to norlonine which is monomethylated and dimethylated to respectively lonine and N-methyllonine (NML) by lolM. LolP catalyzes hydroxylation of the methyl group in N-methylloline (NML) and further oxygenation to N-formylloline (NFL). A plant acetyltransferase is responsible for the acetylation of loline to form N-acetylloline (NAL). LolA might interact with aspartate kinase to prevent feedback inhibition of its activity by these end products and thereby promote production of l-homoserine from l-aspartate. This chain is FAD-binding monooxygenase lolF2, found in Epichloe uncinata (Endophyte fungus).